The primary structure comprises 237 residues: Cyclic-di-GMP-binding biofilm dispersal mediator protein (237 aa).

10–34 (LILGGSRGIGAAIVRRFVTDGANVR) is a binding site for NAD(+). Substrate is bound at residue Ser132. Residue Tyr146 is the Proton acceptor of the active site.

This sequence belongs to the short-chain dehydrogenases/reductases (SDR) family.

Its function is as follows. Increases biofilm dispersal. Acts by binding directly to the signaling molecule cyclic-di-GMP, which decreases the intracellular concentration of cyclic-di-GMP and leads to biofilm dispersal. Also controls other biofilm-related phenotypes such as cell motility, cell size, cell aggregation and production of extracellular DNA and extracellular polysaccharides (EPS). Does not act as a phosphodiesterase. The protein is Cyclic-di-GMP-binding biofilm dispersal mediator protein (bdcA) of Escherichia coli (strain K12).